A 94-amino-acid polypeptide reads, in one-letter code: MIFLLPPVIFVMLLAESVLILGDSEDADLMEMVQMSRPFFNPIIPAVEFVDLREERQRACGHLHDPCPNDRPGHRTCCIGLQCRYGSCLVQVGR.

A signal peptide spans 1 to 22; it reads MIFLLPPVIFVMLLAESVLILG. A propeptide spanning residues 23 to 58 is cleaved from the precursor; it reads DSEDADLMEMVQMSRPFFNPIIPAVEFVDLREERQR. 3 cysteine pairs are disulfide-bonded: cysteine 60–cysteine 78, cysteine 67–cysteine 83, and cysteine 77–cysteine 88.

Belongs to the neurotoxin 14 (magi-1) family. OAIP-1 subfamily. Expressed by the venom gland.

The protein resides in the secreted. In terms of biological role, probable ion channel inhibitor. The sequence is that of U27-theraphotoxin-Cg1a from Chilobrachys guangxiensis (Chinese earth tiger tarantula).